The following is a 296-amino-acid chain: MMFKQYLQVTKPGIIFGNLISVIGGFLLASKGSINYPLFIYTLVGVSLVVASGCVFNNYIDRDIDRKMERTKNRVLVKGLISPAVSLVYATLLGIAGFMLLWFGANPLACWLGVMGFVVYVGIYSLYMKRHSVYGTLIGSLSGAAPPVIGYCAVTGEFDSGALILLAIFSLWQMPHSYAIAIFRFKDYQAANIPVLPVVKGISVAKNHITLYIIAFAVATLMLSLGGYAGYKYLVVAAAVSVWWLGMALRGYKVEDDKVWARKLFGFSIIAITALSVMMSVDFMVPDSHSLLASVW.

9 helical membrane-spanning segments follow: residues Val9–Ala29, Tyr36–Phe56, Ala84–Gly104, Leu108–Met128, Val133–Ala153, Leu163–Phe183, Ile209–Ala229, Leu234–Val254, and Phe265–Val285.

It belongs to the UbiA prenyltransferase family. Protoheme IX farnesyltransferase subfamily.

The protein localises to the cell inner membrane. It carries out the reaction heme b + (2E,6E)-farnesyl diphosphate + H2O = Fe(II)-heme o + diphosphate. It participates in porphyrin-containing compound metabolism; heme O biosynthesis; heme O from protoheme: step 1/1. In terms of biological role, converts heme B (protoheme IX) to heme O by substitution of the vinyl group on carbon 2 of heme B porphyrin ring with a hydroxyethyl farnesyl side group. This is Protoheme IX farnesyltransferase from Citrobacter koseri (strain ATCC BAA-895 / CDC 4225-83 / SGSC4696).